The following is a 173-amino-acid chain: Lens fiber membrane intrinsic protein (173 aa).

The Cytoplasmic portion of the chain corresponds to 1-3 (MYS). The helical transmembrane segment at 4–24 (FMGGGLFCAWVGTILLVVATA) threads the bilayer. At 25–66 (TDHWMQYRLSGAFAHQGLWRYCLGTKCYLQTESIAYWNATRA) the chain is on the extracellular side. C-linked (Man) tryptophan; partial glycosylation is found at W43 and W61. A helical transmembrane segment spans residues 67–87 (FMILSSLCATSGIIMGIVAFA). Over 88-98 (QQPTFTRLSRP) the chain is Cytoplasmic. Residues 99-119 (FSAGIMFFASTFFVLLALAIY) form a helical membrane-spanning segment. Over 120–140 (TGVTVSFLGRRFGDWRFSWSY) the chain is Extracellular. The chain crosses the membrane as a helical span at residues 141–161 (ILGWVALLMTFFAGIFYMCAY). Topologically, residues 162 to 173 (RMHECRRLSTPR) are cytoplasmic. Phosphoserine is present on S170. A Phosphothreonine modification is found at T171.

This sequence belongs to the PMP-22/EMP/MP20 family. In terms of assembly, seems to be associated with itself or another lens membrane component via disulfide bonds. Post-translationally, predominantly monophosphorylated on Ser-170. Only about 15% diphosphorylated on both Ser-170 and Thr-171. C-glycosylated. Trp-43 is more extensively C-glycosylated than Trp-61. C-glycosylation may be involved in membrane trafficking. As to expression, eye lens specific.

The protein resides in the membrane. Its function is as follows. Present in the thicker 16-17 nm junctions of mammalian lens fiber cells, where it may contribute to cell junctional organization. Acts as a receptor for calmodulin. May play an important role in both lens development and cataractogenesis. This is Lens fiber membrane intrinsic protein (LIM2) from Bos taurus (Bovine).